Reading from the N-terminus, the 787-residue chain is MKTEVTENIFEQAWDGFKGTNWRDKASVTRFVQENYKPYDGDESFLAGPTERTLKVKKIIEDTKNHYEEVGFPFDTDRVTSIDKIPAGYIDANDKELELIYGMQNSELFRLNFMPRGGLRVAEKILTEHGLSVDPGLHDVLSQTMTSVNDGIFRAYTSAIRKARHAHTVTGLPDAYSRGRIIGVYARLALYGADYLMKEKAKEWDAITEINEENIRLKEEINMQYQALQEVVNFGALYGLDVSRPAMNVKEAIQWVNIAYMAVCRVINGAATSLGRVPIVLDIFAERDLARGTFTEQEIQEFVDDFVLKLRTMKFARAAAYDELYSGDPTFITTSMAGMGNDGRHRVTKMDYRFLNTLDTIGNAPEPNLTVLWDSKLPYSFKRYSMSMSHKHSSIQYEGVETMAKDGYGEMSCISCCVSPLDPENEEGRHNLQYFGARVNVLKAMLTGLNGGYDDVHKDYKVFDIEPVRDEILDYDTVMENFDKSLDWLTDTYVDAMNIIHYMTDKYNYEAVQMAFLPTKVRANMGFGICGFANTVDSLSAIKYAKVKTLRDENGYIYDYEVEGDFPRYGEDDDRADDIAKLVMKMYHEKLASHKLYKNAEATVSLLTITSNVAYSKQTGNSPVHKGVFLNEDGTVNKSKLEFFSPGANPSNKAKGGWLQNLRSLAKLEFKDANDGISLTTQVSPRALGKTRDEQVDNLVQILDGYFTPGALINGTEFAGQHVNLNVMDLKDVYDKIMRGEDVIVRISGYCVNTKYLTPEQKQELTERVFHEVLSNDDEEVMHTSNI.

A PFL domain is found at 8–629 (NIFEQAWDGF…GNSPVHKGVF (622 aa)). The active-site S-acetylcysteine intermediate is the C416. The active-site Cysteine radical intermediate is the C417. A Glycine radical domain is found at 645 to 774 (SPGANPSNKA…LTERVFHEVL (130 aa)). G749 is modified (glycine radical).

It belongs to the glycyl radical enzyme (GRE) family. PFL subfamily. In terms of assembly, homodimer.

Its subcellular location is the cytoplasm. It carries out the reaction formate + acetyl-CoA = pyruvate + CoA. Its pathway is fermentation; pyruvate fermentation; formate from pyruvate: step 1/1. The sequence is that of Formate acetyltransferase (pfl) from Lactococcus lactis subsp. lactis (strain IL1403) (Streptococcus lactis).